We begin with the raw amino-acid sequence, 420 residues long: ATP phosphoribosyltransferase regulatory subunit (420 aa).

The protein belongs to the class-II aminoacyl-tRNA synthetase family. HisZ subfamily. In terms of assembly, heteromultimer composed of HisG and HisZ subunits.

Its subcellular location is the cytoplasm. Its pathway is amino-acid biosynthesis; L-histidine biosynthesis; L-histidine from 5-phospho-alpha-D-ribose 1-diphosphate: step 1/9. In terms of biological role, required for the first step of histidine biosynthesis. May allow the feedback regulation of ATP phosphoribosyltransferase activity by histidine. This chain is ATP phosphoribosyltransferase regulatory subunit, found in Bacillus cereus (strain AH820).